The sequence spans 1010 residues: Phosphatidylserine decarboxylase proenzyme 2 (1010 aa).

C2 domains lie at 1–114 (MSQA…SSWE) and 247–370 (DFES…DKPC). Ca(2+) contacts are provided by Asp-342, Ser-345, and Asp-348. The 36-residue stretch at 458–493 (LRRQLWMHLLQGNDTQMKGTLDLIELNYFVDCLGSN) folds into the EF-hand domain. Active-site charge relay system; for autoendoproteolytic cleavage activity residues include Asp-734, His-793, and Ser-880. The Schiff-base intermediate with substrate; via pyruvic acid; for decarboxylase activity role is filled by Ser-880. Ser-880 is modified (pyruvic acid (Ser); by autocatalysis).

This sequence belongs to the phosphatidylserine decarboxylase family. PSD-B subfamily. Eukaryotic type II sub-subfamily. In terms of assembly, heterodimer of a large membrane-associated beta subunit and a small pyruvoyl-containing alpha subunit. Interacts with pstB2. This interaction may be a means to structurally tether the donor membrane (ER) harboring PstB2 to acceptor membranes (Golgi/endosomes) harboring PSD2 during PtdSer transport to the site of PtdEtn synthesis. Requires pyruvate as cofactor. Ca(2+) is required as a cofactor. In terms of processing, is synthesized initially as an inactive proenzyme. Formation of the active enzyme involves a self-maturation process in which the active site pyruvoyl group is generated from an internal serine residue via an autocatalytic post-translational modification. Two non-identical subunits are generated from the proenzyme in this reaction, and the pyruvate is formed at the N-terminus of the alpha chain, which is derived from the carboxyl end of the proenzyme. The autoendoproteolytic cleavage occurs by a canonical serine protease mechanism, in which the side chain hydroxyl group of the serine supplies its oxygen atom to form the C-terminus of the beta chain, while the remainder of the serine residue undergoes an oxidative deamination to produce ammonia and the pyruvoyl prosthetic group on the alpha chain. During this reaction, the Ser that is part of the protease active site of the proenzyme becomes the pyruvoyl prosthetic group, which constitutes an essential element of the active site of the mature decarboxylase.

Its subcellular location is the golgi apparatus membrane. It is found in the endosome membrane. The catalysed reaction is a 1,2-diacyl-sn-glycero-3-phospho-L-serine + H(+) = a 1,2-diacyl-sn-glycero-3-phosphoethanolamine + CO2. Its pathway is phospholipid metabolism; phosphatidylethanolamine biosynthesis; phosphatidylethanolamine from CDP-diacylglycerol: step 2/2. Catalyzes the formation of phosphatidylethanolamine (PtdEtn) from phosphatidylserine (PtdSer). Plays a central role in phospholipid metabolism and in the interorganelle trafficking of phosphatidylserine. This chain is Phosphatidylserine decarboxylase proenzyme 2, found in Komagataella phaffii (strain GS115 / ATCC 20864) (Yeast).